Reading from the N-terminus, the 95-residue chain is Small ribosomal subunit protein bS18 (95 aa).

It belongs to the bacterial ribosomal protein bS18 family. Part of the 30S ribosomal subunit. Forms a tight heterodimer with protein bS6.

Binds as a heterodimer with protein bS6 to the central domain of the 16S rRNA, where it helps stabilize the platform of the 30S subunit. The sequence is that of Small ribosomal subunit protein bS18 from Rickettsia canadensis (strain McKiel).